The following is a 485-amino-acid chain: Zinc finger protein 639 (485 aa).

The span at 1–14 (MNEYPKKRKRKTLH) shows a compositional bias: basic residues. Residues 1 to 20 (MNEYPKKRKRKTLHPSRYSD) form a disordered region. The residue at position 60 (Ser60) is a Phosphoserine. A Glycyl lysine isopeptide (Lys-Gly) (interchain with G-Cter in SUMO2) cross-link involves residue Lys76. A Phosphoserine modification is found at Ser88. Glycyl lysine isopeptide (Lys-Gly) (interchain with G-Cter in SUMO2) cross-links involve residues Lys177, Lys181, and Lys226. C2H2-type zinc fingers lie at residues 204 to 227 (YKCE…ILKH), 233 to 255 (NVCR…AKLH), 260 to 283 (YICK…ADTH), 289 to 311 (YWCE…FQEH), 374 to 397 (FVCQ…AIEH), 403 to 425 (HVCD…LNSH), 431 to 454 (YLCQ…DFKH), and 460 to 482 (HKCS…LPVH). The interval 371-455 (KNFFVCQVCG…LKIHLDFKHS (85 aa)) is interaction with CTNNA2.

Belongs to the krueppel C2H2-type zinc-finger protein family. As to quaternary structure, interacts with CTNNA2.

The protein localises to the nucleus. In terms of biological role, binds DNA and may function as a transcriptional repressor. The chain is Zinc finger protein 639 (ZNF639) from Homo sapiens (Human).